The following is a 320-amino-acid chain: Adhesin MafA 3 (320 aa).

Residues 1–18 (MQARLLIPILFSVFILSA) form the signal peptide. Cys19 is lipidated: N-palmitoyl cysteine. Cys19 carries S-diacylglycerol cysteine lipidation. The segment covering 288 to 298 (HTGNSAPSVET) has biased composition (polar residues). The segment at 288 to 320 (HTGNSAPSVETDNSHEGYGYSDEVVRQHRQGQP) is disordered.

This sequence belongs to the MafA family.

The protein localises to the cell outer membrane. The polypeptide is Adhesin MafA 3 (mafA3) (Neisseria meningitidis serogroup C / serotype 2a (strain ATCC 700532 / DSM 15464 / FAM18)).